The chain runs to 180 residues: Small ribosomal subunit protein bS21c (180 aa).

The N-terminal 79 residues, 1-79, are a transit peptide targeting the chloroplast; that stretch reads MASTSSLLNF…PSLAFSNTLY (79 aa). The span at 14–45 shows a compositional bias: low complexity; that stretch reads LFPSNTSLPPSSNPKFPNPNSLSSQQNSISIS. 2 disordered regions span residues 14-49 and 124-180; these read LFPS…SKKH and NKQE…GAPF. Basic residues predominate over residues 130–147; it reads KRKHREAAKRNSRRRRGP. The span at 154–166 shows a compositional bias: basic and acidic residues; that stretch reads GKEEATKVDKKED.

In terms of assembly, component of the chloroplast small ribosomal subunit (SSU). Mature 70S chloroplast ribosomes of higher plants consist of a small (30S) and a large (50S) subunit. The 30S small subunit contains 1 molecule of ribosomal RNA (16S rRNA) and 24 different proteins. The 50S large subunit contains 3 rRNA molecules (23S, 5S and 4.5S rRNA) and 33 different proteins. bS21c binds directly to 16S ribosomal RNA.

The protein resides in the plastid. The protein localises to the chloroplast. In terms of biological role, component of the chloroplast ribosome (chloro-ribosome), a dedicated translation machinery responsible for the synthesis of chloroplast genome-encoded proteins, including proteins of the transcription and translation machinery and components of the photosynthetic apparatus. The sequence is that of Small ribosomal subunit protein bS21c (rps21) from Spinacia oleracea (Spinach).